A 352-amino-acid chain; its full sequence is tRNA N6-adenosine threonylcarbamoyltransferase (352 aa).

Residues His109 and His113 each coordinate Fe cation. Substrate-binding positions include 136-140 (TVSGG), Asp169, Gly182, Asp186, and Asn284. Residue Asp312 participates in Fe cation binding.

Belongs to the KAE1 / TsaD family. It depends on Fe(2+) as a cofactor.

The protein resides in the cytoplasm. It carries out the reaction L-threonylcarbamoyladenylate + adenosine(37) in tRNA = N(6)-L-threonylcarbamoyladenosine(37) in tRNA + AMP + H(+). Required for the formation of a threonylcarbamoyl group on adenosine at position 37 (t(6)A37) in tRNAs that read codons beginning with adenine. Is involved in the transfer of the threonylcarbamoyl moiety of threonylcarbamoyl-AMP (TC-AMP) to the N6 group of A37, together with TsaE and TsaB. TsaD likely plays a direct catalytic role in this reaction. In Chloroherpeton thalassium (strain ATCC 35110 / GB-78), this protein is tRNA N6-adenosine threonylcarbamoyltransferase.